Reading from the N-terminus, the 175-residue chain is Regenerating islet-derived protein 3-gamma (175 aa).

An N-terminal signal peptide occupies residues 1 to 26 (MLPPMALPSVSWMLLSCLILLCQVQG). A propeptide spanning residues 27 to 37 (EETQKELPSPR) is cleaved from the precursor. Intrachain disulfides connect Cys40–Cys51, Cys68–Cys171, and Cys146–Cys163. In terms of domain architecture, C-type lectin spans 47–172 (YGSPCYALFL…CDAKLPYVCK (126 aa)). A sufficient to activate EXTL3 region spans residues 103-118 (WIGLHDPTQGSEPDGD). Position 107 (His107) interacts with Zn(2+). The EPN motif lies at 114–116 (EPD). Residues Glu121 and His145 each coordinate Zn(2+).

As to quaternary structure, forms a hexameric membrane-permeabilizing oligomeric pore on membrane phospholipids. The hexamer is formed by three dimers related by helical symmetry. Forms filaments, filamentation traps pore complexes and limits damage to host cells. Interacts with EXTL3. Post-translationally, proteolytic processing by trypsin removes an inhibitory N-terminal propeptide and is essential for peptidoglycan binding and antibacterial activity. In terms of tissue distribution, predominantly expressed in pancreas, where it may be restricted to exocrine pancreas. Moderate expression levels in testis and weak in heart, kidney and placenta.

The protein localises to the secreted. Its subcellular location is the cytoplasm. Its activity is regulated as follows. Lipopolysaccharide inhibits pore-forming activity, explaining why is bactericidal for Gram-positive but not Gram-negative bacteria. Its function is as follows. Bactericidal C-type lectin which acts exclusively against Gram-positive bacteria and mediates bacterial killing by binding to surface-exposed carbohydrate moieties of peptidoglycan. Restricts bacterial colonization of the intestinal epithelial surface and consequently limits activation of adaptive immune responses by the microbiota. Functionally, acts as a hormone in response to different stimuli like anti-inflammatory signals, such as IL17A, or gut microbiome. Is secreted by different cell types to activate its receptor EXTL3 and induce cell specific signaling pathways. Induced by IL17A in keratinocytes, regulates keratinocyte proliferation and differentiation after skin injury. In parallel, inhibits skin inflammation through the inhibition of inflammatory cytokines such as IL6 and TNF. Induced by IL22 in lung epithelial cells, inhibits cytokine production and regulates allergic airway inflammation. Induced in small intestine by inulin-enriched diet and Lactobacillus gasseri enriched microbiome, plays a role in the improvement of gut barrier function, the regulation of energy balance and glucose levels. Modulates microbiota composition in duodenal contents. Produced by nociceptor in response to endotoxins, prevents endotoxic death by targeting kynurenine pathway in microglia. Has bacteriostatic activity. In terms of biological role, has bactericidal activity against L.monocytogenes and methicillin-resistant S.aureus. This Homo sapiens (Human) protein is Regenerating islet-derived protein 3-gamma.